Reading from the N-terminus, the 429-residue chain is Serine--tRNA ligase (429 aa).

Residue 236–238 (TAE) coordinates L-serine. ATP is bound at residue 267-269 (RSE). Residue E290 coordinates L-serine. An ATP-binding site is contributed by 354 to 357 (EISS). S390 serves as a coordination point for L-serine.

This sequence belongs to the class-II aminoacyl-tRNA synthetase family. Type-1 seryl-tRNA synthetase subfamily. Homodimer. The tRNA molecule binds across the dimer.

It is found in the cytoplasm. It carries out the reaction tRNA(Ser) + L-serine + ATP = L-seryl-tRNA(Ser) + AMP + diphosphate + H(+). The catalysed reaction is tRNA(Sec) + L-serine + ATP = L-seryl-tRNA(Sec) + AMP + diphosphate + H(+). It participates in aminoacyl-tRNA biosynthesis; selenocysteinyl-tRNA(Sec) biosynthesis; L-seryl-tRNA(Sec) from L-serine and tRNA(Sec): step 1/1. In terms of biological role, catalyzes the attachment of serine to tRNA(Ser). Is also able to aminoacylate tRNA(Sec) with serine, to form the misacylated tRNA L-seryl-tRNA(Sec), which will be further converted into selenocysteinyl-tRNA(Sec). This is Serine--tRNA ligase from Photorhabdus laumondii subsp. laumondii (strain DSM 15139 / CIP 105565 / TT01) (Photorhabdus luminescens subsp. laumondii).